The following is a 474-amino-acid chain: tRNA-2-methylthio-N(6)-dimethylallyladenosine synthase (474 aa).

Residues 3–120 (KKLHIKTWGC…LPEMINSVRG (118 aa)) form the MTTase N-terminal domain. [4Fe-4S] cluster contacts are provided by cysteine 12, cysteine 49, cysteine 83, cysteine 157, cysteine 161, and cysteine 164. Residues 143 to 375 (RAEGPTAFVS…QERINQQAMA (233 aa)) enclose the Radical SAM core domain. The TRAM domain occupies 378–441 (RRMLGTVQRI…TNSLRGKIVR (64 aa)).

It belongs to the methylthiotransferase family. MiaB subfamily. As to quaternary structure, monomer. Requires [4Fe-4S] cluster as cofactor.

The protein localises to the cytoplasm. It carries out the reaction N(6)-dimethylallyladenosine(37) in tRNA + (sulfur carrier)-SH + AH2 + 2 S-adenosyl-L-methionine = 2-methylsulfanyl-N(6)-dimethylallyladenosine(37) in tRNA + (sulfur carrier)-H + 5'-deoxyadenosine + L-methionine + A + S-adenosyl-L-homocysteine + 2 H(+). In terms of biological role, catalyzes the methylthiolation of N6-(dimethylallyl)adenosine (i(6)A), leading to the formation of 2-methylthio-N6-(dimethylallyl)adenosine (ms(2)i(6)A) at position 37 in tRNAs that read codons beginning with uridine. The polypeptide is tRNA-2-methylthio-N(6)-dimethylallyladenosine synthase (Klebsiella pneumoniae subsp. pneumoniae (strain ATCC 700721 / MGH 78578)).